The chain runs to 456 residues: Probable glycine dehydrogenase (decarboxylating) subunit 1 (456 aa).

This sequence belongs to the GcvP family. N-terminal subunit subfamily. The glycine cleavage system is composed of four proteins: P, T, L and H. In this organism, the P 'protein' is a heterodimer of two subunits.

It carries out the reaction N(6)-[(R)-lipoyl]-L-lysyl-[glycine-cleavage complex H protein] + glycine + H(+) = N(6)-[(R)-S(8)-aminomethyldihydrolipoyl]-L-lysyl-[glycine-cleavage complex H protein] + CO2. The glycine cleavage system catalyzes the degradation of glycine. The P protein binds the alpha-amino group of glycine through its pyridoxal phosphate cofactor; CO(2) is released and the remaining methylamine moiety is then transferred to the lipoamide cofactor of the H protein. The protein is Probable glycine dehydrogenase (decarboxylating) subunit 1 of Rhizorhabdus wittichii (strain DSM 6014 / CCUG 31198 / JCM 15750 / NBRC 105917 / EY 4224 / RW1) (Sphingomonas wittichii).